Consider the following 107-residue polypeptide: MKYLGAYLLATLGGNASPSAQDVLKVLEAGGLDCDMENANSVVDALKGKTISEVIAQGKVKLSSVPSGGSAPAAAAPSGGAAPKAEEKKKEEPKEESDDDMGFGLFD.

The span at 63–83 (SSVPSGGSAPAAAAPSGGAAP) shows a compositional bias: low complexity. Residues 63-107 (SSVPSGGSAPAAAAPSGGAAPKAEEKKKEEPKEESDDDMGFGLFD) are disordered. Basic and acidic residues predominate over residues 84–93 (KAEEKKKEEP).

Belongs to the eukaryotic ribosomal protein P1/P2 family. In terms of assembly, P1 and P2 exist as dimers at the large ribosomal subunit. Phosphorylated.

Functionally, plays an important role in the elongation step of protein synthesis. In Caenorhabditis elegans, this protein is Large ribosomal subunit protein P2.